The sequence spans 245 residues: tRNA pseudouridine synthase A (245 aa).

D52 functions as the Nucleophile in the catalytic mechanism. Y111 contributes to the substrate binding site.

Belongs to the tRNA pseudouridine synthase TruA family. In terms of assembly, homodimer.

It catalyses the reaction uridine(38/39/40) in tRNA = pseudouridine(38/39/40) in tRNA. Formation of pseudouridine at positions 38, 39 and 40 in the anticodon stem and loop of transfer RNAs. The polypeptide is tRNA pseudouridine synthase A (Rickettsia rickettsii (strain Iowa)).